Consider the following 327-residue polypeptide: 4-hydroxythreonine-4-phosphate dehydrogenase (327 aa).

Substrate-binding residues include histidine 134 and threonine 135. A divalent metal cation contacts are provided by histidine 164, histidine 209, and histidine 264. Residues lysine 272, asparagine 281, and arginine 290 each contribute to the substrate site.

Belongs to the PdxA family. In terms of assembly, homodimer. Zn(2+) serves as cofactor. Mg(2+) is required as a cofactor. The cofactor is Co(2+).

Its subcellular location is the cytoplasm. The catalysed reaction is 4-(phosphooxy)-L-threonine + NAD(+) = 3-amino-2-oxopropyl phosphate + CO2 + NADH. Its pathway is cofactor biosynthesis; pyridoxine 5'-phosphate biosynthesis; pyridoxine 5'-phosphate from D-erythrose 4-phosphate: step 4/5. Catalyzes the NAD(P)-dependent oxidation of 4-(phosphooxy)-L-threonine (HTP) into 2-amino-3-oxo-4-(phosphooxy)butyric acid which spontaneously decarboxylates to form 3-amino-2-oxopropyl phosphate (AHAP). The sequence is that of 4-hydroxythreonine-4-phosphate dehydrogenase from Shewanella frigidimarina (strain NCIMB 400).